The chain runs to 963 residues: MSNAKSLEQLEQTQDFIRRHIGPSPAQVSDMLSALEVSSVEELIGQTVPAGIRLEQPLTVGESRTEVETLSYLKSVASKNKVFKSYIGQGYHPTHVPHVILRNVLENPGWYTAYTPYQPEIAQGRLESLLNFQTMTLDLTGLDLASASLLDESTAAAEAMGLAKRVSKAKKANAFFIADDVHTQTIDVVSTRAEQFGFEIIVGKAADAVNHEIFGALFQYPSTTGEVVDITDLIAGVQSKKAIACVAADIMSLLLLKAPGKLGADVVLGSAQRFGVPMGYGGPHAAFFATRDAYKRSLPGRIIGVSKDRLGNDALRMAMQTREQHIRRDKANSNICTAQVLLANMAAFYAVYHGPQGLKTIAQRIHRFADILAAGLQAKGVSLKHNTWFDTLTVVSDSKADVIARALASGVNFATNRDGEYSIALSETTTRADVAQLFDIVLGEGHGLSVDAIAADIENNGSTSIPASLERDDEVLTHPNFNSYHSETEMLRYIKRLENKDLALNHSMISLGSCTMKLNATAEMIPITWPEFSNLHPFCPLDQAQGYQIMMGELHDWLVNITGYDAVSLQPNSGAQGEYAGLIAIRKYHESRGDAHRNVCLIPSSAHGTNPASAQMASMKIVVVDCDKNGNVDMADLKAKAEAVAENLSCIMITYPSTHGVYEETIREICDVIHQHGGQVYMDGANMNAQVGVTSPGFIGSDVSHLNLHKTFCIPHGGGGPGVGPIGVKSHLAPFMPNHSIINVPGTNEGNGAVSAAPYGSASILPISWAYITMMGSEGLKQATEMAIVNANYLTHELSKHFPILYRGRNNRVAHECIVDLRPLKELSGITEMDVAKRLQDYGFHSPTMSFPVAGTLMIEPTESESKVEIDRFIEAMVSIKSEIDKVISGEWSIENNPLVFAPHTQGDVLGNEWDRAYDRFYAAFPVPSVAKNKFWPTVTRIDDVYGDRNLVCACPPVETYRD.

Position 710 is an N6-(pyridoxal phosphate)lysine (Lys-710).

The protein belongs to the GcvP family. In terms of assembly, the glycine cleavage system is composed of four proteins: P, T, L and H. Requires pyridoxal 5'-phosphate as cofactor.

It carries out the reaction N(6)-[(R)-lipoyl]-L-lysyl-[glycine-cleavage complex H protein] + glycine + H(+) = N(6)-[(R)-S(8)-aminomethyldihydrolipoyl]-L-lysyl-[glycine-cleavage complex H protein] + CO2. Its function is as follows. The glycine cleavage system catalyzes the degradation of glycine. The P protein binds the alpha-amino group of glycine through its pyridoxal phosphate cofactor; CO(2) is released and the remaining methylamine moiety is then transferred to the lipoamide cofactor of the H protein. The chain is Glycine dehydrogenase (decarboxylating) from Pseudoalteromonas translucida (strain TAC 125).